The primary structure comprises 436 residues: Trigger factor (436 aa).

In terms of domain architecture, PPIase FKBP-type spans 163–248 (GDRVTLDFAG…VKEVAEGVLP (86 aa)).

It belongs to the FKBP-type PPIase family. Tig subfamily.

The protein resides in the cytoplasm. It carries out the reaction [protein]-peptidylproline (omega=180) = [protein]-peptidylproline (omega=0). Functionally, involved in protein export. Acts as a chaperone by maintaining the newly synthesized protein in an open conformation. Functions as a peptidyl-prolyl cis-trans isomerase. This Bordetella petrii (strain ATCC BAA-461 / DSM 12804 / CCUG 43448) protein is Trigger factor.